A 467-amino-acid chain; its full sequence is Chromosomal replication initiator protein DnaA (467 aa).

The segment at M1 to A90 is domain I, interacts with DnaA modulators. A domain II region spans residues V91–S130. Over residues P98 to P111 the composition is skewed to low complexity. Residues P98–N119 are disordered. Positions N131–A347 are domain III, AAA+ region. Positions 175, 177, 178, and 179 each coordinate ATP. The interval N348–S467 is domain IV, binds dsDNA.

The protein belongs to the DnaA family. As to quaternary structure, oligomerizes as a right-handed, spiral filament on DNA at oriC.

It localises to the cytoplasm. Plays an essential role in the initiation and regulation of chromosomal replication. ATP-DnaA binds to the origin of replication (oriC) to initiate formation of the DNA replication initiation complex once per cell cycle. Binds the DnaA box (a 9 base pair repeat at the origin) and separates the double-stranded (ds)DNA. Forms a right-handed helical filament on oriC DNA; dsDNA binds to the exterior of the filament while single-stranded (ss)DNA is stabiized in the filament's interior. The ATP-DnaA-oriC complex binds and stabilizes one strand of the AT-rich DNA unwinding element (DUE), permitting loading of DNA polymerase. After initiation quickly degrades to an ADP-DnaA complex that is not apt for DNA replication. Binds acidic phospholipids. The chain is Chromosomal replication initiator protein DnaA from Shigella sonnei (strain Ss046).